The sequence spans 421 residues: MRVIVLGSGVIGVASAYYLARQGAEVTVLDRQSGPAEETSFGNAGQISPGYSTPWAAPGIPFKAVKWMFQHHAPLAINLDGSMWQLQWMAQMLKNCNPQSYAVNKERMMRVAEYSRDCLRELRKDTGIHYENRAKGTLQLFRKEAQMEAVQRDISVLEECGVSYELLNGNELGRVEPALANAQDKLVGGLHLPNDETGDCYLFTNALAQIAKELGVNFQFNQNVEKLIVEGDQIKGVQVNGKVLTADRYVLAFGSYSRDFLKPLDLQLPVYPVKGYSLTIPIVAPAFAPQSTVLDETYKIAITRFDQRIRVGGMAELSGFNLGLNEDRHATLQMVTQDLFPGGDMEQASFWTGLRPMTPDSTPIIGATRFKNLFLNTGHGTLGWTMACGSGKLISDIVLNHKTDISTDGLSIQRYSHAHAA.

An FAD-binding site is contributed by 3–17 (VIVLGSGVIGVASAY).

Belongs to the DadA oxidoreductase family. FAD serves as cofactor.

The enzyme catalyses a D-alpha-amino acid + A + H2O = a 2-oxocarboxylate + AH2 + NH4(+). It participates in amino-acid degradation; D-alanine degradation; NH(3) and pyruvate from D-alanine: step 1/1. Functionally, oxidative deamination of D-amino acids. This chain is D-amino acid dehydrogenase, found in Acinetobacter baumannii (strain SDF).